Here is a 467-residue protein sequence, read N- to C-terminus: GTPase Der (467 aa).

EngA-type G domains follow at residues 25–188 (PVVA…PEAP) and 199–372 (RRVA…ASWE). Residues 31–38 (GRPNVGKS), 78–82 (DTGGW), 140–143 (NKAD), 205–212 (GRPNVGKS), 252–256 (DTAGL), and 317–320 (NKWD) each bind GTP. Residues 373–455 (TRVPTAQLNA…PIEIAVRPRK (83 aa)) enclose the KH-like domain.

It belongs to the TRAFAC class TrmE-Era-EngA-EngB-Septin-like GTPase superfamily. EngA (Der) GTPase family. In terms of assembly, associates with the 50S ribosomal subunit.

In terms of biological role, GTPase that plays an essential role in the late steps of ribosome biogenesis. This is GTPase Der from Salinispora arenicola (strain CNS-205).